Consider the following 253-residue polypeptide: NTNETKVRFTGETAKIGVSLEMLGRIFNGAGKPIDGGPEIIPEKKLDINGYPLNPVSRNPPNAFVQTGISTIDGTNTLVRGQKLPIFSGSGLPHNTLAAQIARQAKVRGEGEQFAVVFAAMGITNEEANYFMEEFKKPGALENAVVFINLANDPAIERIITPRLALTTAEYLAYEKDMHVLVVLTDMTNYCEALREIAAARNEVPGRRGYPGYMYTDLATLYERAGRVKGRKGTVTQIPILTMPHDDITHPIP.

It belongs to the ATPase alpha/beta chains family. In terms of assembly, has multiple subunits with at least A(3), B(3), C, D, E, F, H, I and proteolipid K(x).

It is found in the cell membrane. Component of the A-type ATP synthase that produces ATP from ADP in the presence of a proton gradient across the membrane. The B chain is a regulatory subunit. The protein is A-type ATP synthase subunit B of Methanothermococcus thermolithotrophicus (Methanococcus thermolithotrophicus).